The following is a 147-amino-acid chain: Large ribosomal subunit protein uL16 (147 aa).

This sequence belongs to the universal ribosomal protein uL16 family. Part of the 50S ribosomal subunit.

In terms of biological role, binds 23S rRNA and is also seen to make contacts with the A and possibly P site tRNAs. The protein is Large ribosomal subunit protein uL16 of Clostridium botulinum (strain ATCC 19397 / Type A).